The chain runs to 200 residues: LHFPL tetraspan subfamily member 6 protein (200 aa).

The first 21 residues, 1-21 (MASSLTCTGVIWALLSFLCAA), serve as a signal peptide directing secretion. 3 helical membrane passes run 84–104 (ICTI…LTAL), 123–143 (GIQF…PLGW), and 166–186 (IGWA…LCTW).

This sequence belongs to the LHFP family. Pancreas, kidney, skeletal muscle, liver, lung brain, heart, colon, small intestine, uterus, testis, prostate, thymus, spleen and placenta.

The protein localises to the membrane. The protein is LHFPL tetraspan subfamily member 6 protein of Homo sapiens (Human).